A 197-amino-acid polypeptide reads, in one-letter code: Phosphoheptose isomerase (197 aa).

Residues 36–197 form the SIS domain; it reads MVNALLNEGK…IDSQLFGSEE (162 aa). A substrate-binding site is contributed by 51-53; it reads NGG. His60 and Glu64 together coordinate Zn(2+). Residues Glu64, 93–94, 119–121, Ser124, and Gln174 each bind substrate; these read ND and STS. Residues Gln174 and His182 each coordinate Zn(2+).

This sequence belongs to the SIS family. GmhA subfamily. Homotetramer. It depends on Zn(2+) as a cofactor.

It is found in the cytoplasm. It carries out the reaction 2 D-sedoheptulose 7-phosphate = D-glycero-alpha-D-manno-heptose 7-phosphate + D-glycero-beta-D-manno-heptose 7-phosphate. It participates in carbohydrate biosynthesis; D-glycero-D-manno-heptose 7-phosphate biosynthesis; D-glycero-alpha-D-manno-heptose 7-phosphate and D-glycero-beta-D-manno-heptose 7-phosphate from sedoheptulose 7-phosphate: step 1/1. Its function is as follows. Catalyzes the isomerization of sedoheptulose 7-phosphate in D-glycero-D-manno-heptose 7-phosphate. The chain is Phosphoheptose isomerase from Pseudomonas fluorescens (strain Pf0-1).